Consider the following 20-residue polypeptide: 44 kDa cell wall protein 2 (20 aa).

It is found in the secreted. It localises to the cell wall. The chain is 44 kDa cell wall protein 2 from Solanum lycopersicum (Tomato).